A 254-amino-acid chain; its full sequence is 5-oxoprolinase subunit A (254 aa).

Belongs to the LamB/PxpA family. As to quaternary structure, forms a complex composed of PxpA, PxpB and PxpC.

It catalyses the reaction 5-oxo-L-proline + ATP + 2 H2O = L-glutamate + ADP + phosphate + H(+). Functionally, catalyzes the cleavage of 5-oxoproline to form L-glutamate coupled to the hydrolysis of ATP to ADP and inorganic phosphate. This Burkholderia thailandensis (strain ATCC 700388 / DSM 13276 / CCUG 48851 / CIP 106301 / E264) protein is 5-oxoprolinase subunit A.